The chain runs to 555 residues: Phosphomethylpyrimidine synthase (555 aa).

Residues asparagine 191, methionine 220, tyrosine 249, histidine 285, 305–307, 346–349, and glutamate 385 each bind substrate; these read SRG and DGLR. Histidine 389 contacts Zn(2+). Position 412 (tyrosine 412) interacts with substrate. Histidine 453 contacts Zn(2+). Cysteine 533, cysteine 536, and cysteine 541 together coordinate [4Fe-4S] cluster.

Belongs to the ThiC family. Homodimer. The cofactor is [4Fe-4S] cluster.

The catalysed reaction is 5-amino-1-(5-phospho-beta-D-ribosyl)imidazole + S-adenosyl-L-methionine = 4-amino-2-methyl-5-(phosphooxymethyl)pyrimidine + CO + 5'-deoxyadenosine + formate + L-methionine + 3 H(+). It functions in the pathway cofactor biosynthesis; thiamine diphosphate biosynthesis. Catalyzes the synthesis of the hydroxymethylpyrimidine phosphate (HMP-P) moiety of thiamine from aminoimidazole ribotide (AIR) in a radical S-adenosyl-L-methionine (SAM)-dependent reaction. The protein is Phosphomethylpyrimidine synthase of Ehrlichia ruminantium (strain Gardel).